Reading from the N-terminus, the 415-residue chain is Zona pellucida-like domain-containing protein 1 (415 aa).

Residues 1 to 19 (MEQIRLLLLLTIRVLSGSA) form the signal peptide. Over 20–372 (QFNGYNCDAN…PPFQLNAITS (353 aa)) the chain is Extracellular. Residues 43-320 (YCGVQAITMK…PICSHRERRD (278 aa)) form the ZP domain. Disulfide bonds link C44-C155 and C79-C104. Residue N164 is glycosylated (N-linked (GlcNAc...) asparagine). 2 disulfide bridges follow: C235-C296 and C255-C313. Residues 323–359 (RRTTWSSQSSSGSAVLSAGPIITRSDETPTNNSQLGS) are disordered. Over residues 328 to 339 (SSQSSSGSAVLS) the composition is skewed to low complexity. Positions 350-359 (TPTNNSQLGS) are enriched in polar residues. Residues 373-393 (ALISGMVILGVMSFSLLVCPL) traverse the membrane as a helical segment. Residues 394 to 415 (ALLHRKGPTSLVLNGIRNPVFD) are Cytoplasmic-facing.

Proteolytically cleaved before the transmembrane segment to yield the secreted form found in the extracellular matrix of the cupula.

It is found in the cytoplasmic vesicle membrane. It localises to the secreted. The protein localises to the extracellular space. The protein resides in the extracellular matrix. Functionally, glycoprotein which is a component of the gelatinous extracellular matrix in the cupulae of the vestibular organ. The polypeptide is Zona pellucida-like domain-containing protein 1 (ZPLD1) (Macaca fascicularis (Crab-eating macaque)).